A 119-amino-acid polypeptide reads, in one-letter code: Large ribosomal subunit protein uL22 (119 aa).

This sequence belongs to the universal ribosomal protein uL22 family. Part of the 50S ribosomal subunit.

Its function is as follows. This protein binds specifically to 23S rRNA; its binding is stimulated by other ribosomal proteins, e.g. L4, L17, and L20. It is important during the early stages of 50S assembly. It makes multiple contacts with different domains of the 23S rRNA in the assembled 50S subunit and ribosome. In terms of biological role, the globular domain of the protein is located near the polypeptide exit tunnel on the outside of the subunit, while an extended beta-hairpin is found that lines the wall of the exit tunnel in the center of the 70S ribosome. The polypeptide is Large ribosomal subunit protein uL22 (Rickettsia rickettsii (strain Iowa)).